A 92-amino-acid chain; its full sequence is Small ribosomal subunit protein uS19c (92 aa).

Belongs to the universal ribosomal protein uS19 family.

The protein localises to the plastid. The protein resides in the chloroplast. Functionally, protein S19 forms a complex with S13 that binds strongly to the 16S ribosomal RNA. This chain is Small ribosomal subunit protein uS19c, found in Nicotiana tomentosiformis (Tobacco).